Reading from the N-terminus, the 432-residue chain is Short/branched chain specific acyl-CoA dehydrogenase, mitochondrial (432 aa).

A mitochondrion-targeting transit peptide spans 1-33; that stretch reads MEGLAVRLLRGSRLLRRNFLTCLSSWKIPPHVS. Lys-70 carries the N6-acetyllysine; alternate modification. The residue at position 70 (Lys-70) is an N6-succinyllysine; alternate. FAD contacts are provided by residues 174–183 and 207–209; these read FCLSEAGAGS and WIS. Ser-183 provides a ligand contact to substrate. Position 183 is a phosphoserine (Ser-183). Tyr-229 and Tyr-283 together coordinate substrate. Lys-284 bears the N6-acetyllysine; alternate mark. The residue at position 284 (Lys-284) is an N6-succinyllysine; alternate. Residue 291–294 coordinates substrate; the sequence is NEGR. FAD contacts are provided by residues Arg-319, Gln-330, and 387–391; that span reads EWMGG. The active-site Proton acceptor is the Glu-414. 416–418 serves as a coordination point for FAD; that stretch reads ASN. Lys-426 is modified (N6-acetyllysine).

Belongs to the acyl-CoA dehydrogenase family. As to quaternary structure, homotetramer. It depends on FAD as a cofactor. In terms of tissue distribution, ubiquitously expressed.

The protein localises to the mitochondrion matrix. It catalyses the reaction 2-methylbutanoyl-CoA + oxidized [electron-transfer flavoprotein] + H(+) = (2E)-2-methylbut-2-enoyl-CoA + reduced [electron-transfer flavoprotein]. The catalysed reaction is (2S)-2-methylbutanoyl-CoA + oxidized [electron-transfer flavoprotein] + H(+) = (2E)-2-methylbut-2-enoyl-CoA + reduced [electron-transfer flavoprotein]. It carries out the reaction (2R)-2-methylbutanoyl-CoA + oxidized [electron-transfer flavoprotein] + H(+) = ethylacryloyl-CoA + reduced [electron-transfer flavoprotein]. The enzyme catalyses butanoyl-CoA + oxidized [electron-transfer flavoprotein] + H(+) = (2E)-butenoyl-CoA + reduced [electron-transfer flavoprotein]. It catalyses the reaction 2-methylpropanoyl-CoA + oxidized [electron-transfer flavoprotein] + H(+) = 2-methylpropenoyl-CoA + reduced [electron-transfer flavoprotein]. The catalysed reaction is hexanoyl-CoA + oxidized [electron-transfer flavoprotein] + H(+) = (2E)-hexenoyl-CoA + reduced [electron-transfer flavoprotein]. It carries out the reaction 2-methylhexanoyl-CoA + oxidized [electron-transfer flavoprotein] + H(+) = 2-methylhexenoyl-CoA + reduced [electron-transfer flavoprotein]. The enzyme catalyses valproyl-CoA + oxidized [electron-transfer flavoprotein] + H(+) = (2E)-2-propylpent-2-enoyl-CoA + reduced [electron-transfer flavoprotein]. It participates in lipid metabolism; mitochondrial fatty acid beta-oxidation. It functions in the pathway amino-acid degradation; L-isoleucine degradation. With respect to regulation, competitively inhibited by valproyl-CoA. Functionally, short and branched chain specific acyl-CoA dehydrogenase that catalyzes the removal of one hydrogen from C-2 and C-3 of the fatty acyl-CoA thioester, resulting in the formation of trans-2-enoyl-CoA. Among the different mitochondrial acyl-CoA dehydrogenases, acts specifically on short and branched chain acyl-CoA derivatives such as (S)-2-methylbutyryl-CoA as well as short straight chain acyl-CoAs such as butyryl-CoA. Plays an important role in the metabolism of L-isoleucine by catalyzing the dehydrogenation of 2-methylbutyryl-CoA, one of the steps of the L-isoleucine catabolic pathway. Can also act on valproyl-CoA, a metabolite of valproic acid, an antiepileptic drug. The sequence is that of Short/branched chain specific acyl-CoA dehydrogenase, mitochondrial from Homo sapiens (Human).